Here is a 1130-residue protein sequence, read N- to C-terminus: Roquin-1 (1130 aa).

Zn(2+) is bound by residues cysteine 14, cysteine 17, cysteine 33, histidine 35, cysteine 38, cysteine 50, and aspartate 53. Residues cysteine 14–glutamine 54 form an RING-type; degenerate zinc finger. The interval valine 128 to proline 176 is HEPN-N. An ROQ region spans residues glutamine 177–threonine 326. The segment at proline 327–serine 399 is HEPN-C. The C3H1-type zinc finger occupies lysine 413 to glutamate 441. Serine 462 is modified (phosphoserine). Disordered regions lie at residues leucine 493–proline 567 and proline 722–aspartate 750. Positions isoleucine 497–glutamine 506 are enriched in polar residues. A phosphoserine mark is found at serine 531 and serine 535. Composition is skewed to pro residues over residues asparagine 553–proline 567 and proline 732–histidine 746. Phosphoserine is present on residues serine 861, serine 1107, and serine 1110. The tract at residues lysine 1100–proline 1130 is disordered. The segment covering asparagine 1116 to proline 1130 has biased composition (polar residues).

Interacts with DDX6 and EDC4. Interacts with CCR4-NOT deadenylase complex. Interacts with RC3H1; the interaction is RNA independent. In terms of processing, proteolytically cleaved after Arg-510 and Arg-579 by MALT1 in activated CD4(+) T cells; cleavage at Arg-510 and Arg-579 is critical for promoting RC3H1 degradation in response to T-cell receptor (TCR) stimulation, and hence is necessary for prolonging the stability of a set of mRNAs controlling Th17 cell differentiation. Widely expressed, with highest levels in lymph node and thymus and slightly lesser amounts in brain, lung, and spleen (at protein level). Very weak expression in heart, muscle, and kidney (at protein level). Expressed in CD4(+) helper T-cells (at protein level).

Its subcellular location is the cytoplasm. It localises to the P-body. The protein resides in the cytoplasmic granule. The catalysed reaction is S-ubiquitinyl-[E2 ubiquitin-conjugating enzyme]-L-cysteine + [acceptor protein]-L-lysine = [E2 ubiquitin-conjugating enzyme]-L-cysteine + N(6)-ubiquitinyl-[acceptor protein]-L-lysine.. The protein operates within protein modification; protein ubiquitination. Functionally, post-transcriptional repressor of mRNAs containing a conserved stem loop motif, called constitutive decay element (CDE), which is often located in the 3'-UTR, as in HMGXB3, ICOS, IER3, NFKBID, NFKBIZ, PPP1R10, TNF, TNFRSF4 and in many more mRNAs. Cleaves translationally inactive mRNAs harboring a stem-loop (SL), often located in their 3'-UTRs, during the early phase of inflammation in a helicase UPF1-independent manner. Binds to CDE and promotes mRNA deadenylation and degradation. This process does not involve miRNAs. In follicular helper T (Tfh) cells, represses of ICOS and TNFRSF4/Ox40 expression, thus preventing spontaneous Tfh cell differentiation, germinal center B-cell differentiation in the absence of immunization and autoimmunity. In resting or LPS-stimulated macrophages, controls inflammation by suppressing TNF expression. Also recognizes CDE in its own mRNA and in that of paralogous RC3H2, possibly leading to feedback loop regulation. Inhibits cooperatively with ZC3H12A the differentiation of helper T cells Th17 in lungs. They repress target mRNA encoding the Th17 cell-promoting factors IL6, ICOS, REL, IRF4, NFKBID and NFKBIZ. The cooperation requires RNA-binding by RC3H1 and the nuclease activity of ZC3H12A. Recognizes and binds mRNAs containing a hexaloop stem-loop motif, called alternative decay element (ADE). Together with ZC3H12A, destabilizes TNFRSF4/OX40 mRNA by binding to the conserved stem loop structure in its 3'UTR. Able to interact with double-stranded RNA. miRNA-binding protein that regulates microRNA homeostasis. Enhances DICER-mediated processing of pre-MIR146a but reduces mature MIR146a levels through an increase of 3' end uridylation. Both inhibits ICOS mRNA expression and they may act together to exert the suppression. Acts as a ubiquitin E3 ligase. Pairs with E2 enzymes UBE2A, UBE2B, UBE2D2, UBE2F, UBE2G1, UBE2G2 and UBE2L3 and produces polyubiquitin chains. Shows the strongest activity when paired with UBE2N:UBE2V1 or UBE2N:UBE2V2 E2 complexes and generate both short and long polyubiquitin chains. The sequence is that of Roquin-1 from Mus musculus (Mouse).